We begin with the raw amino-acid sequence, 372 residues long: Protein Wnt-1 (372 aa).

Positions 1–29 (MLKSTQVILIFILLISIVESLSWLALGLA) are cleaved as a signal peptide. 3 cysteine pairs are disulfide-bonded: Cys77/Cys88, Cys130/Cys138, and Cys140/Cys158. Residue Asn87 is glycosylated (N-linked (GlcNAc...) asparagine). Residue Asn187 is glycosylated (N-linked (GlcNAc...) asparagine). Disulfide bonds link Cys225/Cys239, Cys227/Cys234, Cys301/Cys332, Cys317/Cys327, Cys331/Cys371, Cys347/Cys362, Cys349/Cys359, and Cys354/Cys355. A lipid anchor (O-palmitoleoyl serine; by mom-1) is attached at Ser231.

It belongs to the Wnt family. Palmitoleoylation is required for efficient binding to frizzled receptors. Depalmitoleoylation leads to Wnt signaling pathway inhibition. In terms of tissue distribution, expressed in intestine, some head neurons and ventral nerve cord and pharyngeal neurons. Expressed in the tail and weakly expressed in the vulva and body wall muscles. Expressed highly in posterior dorsal and ventral muscle cells.

The protein localises to the secreted. It localises to the extracellular space. It is found in the extracellular matrix. The protein resides in the cytoplasm. Its subcellular location is the cell membrane. Its function is as follows. Ligand for members of the frizzled family of seven transmembrane receptors. Probable developmental protein. May be a signaling molecule which affects the development of discrete regions of tissues. Is likely to signal over only few cell diameters. Binds receptor tyrosine kinase cam-1. Together with Wnt ligand cwn-2, regulates the migration of CAN, ALM, BDU and HSN neurons during embryogenesis, the migration of QL and QR neuroblast descendants during larval development, and polarity of ALM neurons. Also acts with the Wnt ligand egl-20 to direct HSN neuron migration. Acts through the Wnt receptor cfz-2 to direct ALM migration. Also plays a role in axon growth and guidance in HSN and male CP neurons. In addition, together with Wnt ligand cwn-2, negatively regulates developmental neurite pruning of AIM neurons probably by acting as a ligand for receptor tyrosine kinase cam-1. Probably by activating the Wnt/Frizzled pathway, may regulate vulva development. May act redundantly with other Wnt ligands such as cwn-2 and mom-2 to control seam cell polarity. The chain is Protein Wnt-1 (cwn-1) from Caenorhabditis elegans.